We begin with the raw amino-acid sequence, 349 residues long: B3 domain-containing protein At5g24050 (349 aa).

Positions 240–341 (FNNLLRNDFL…ILCFAMEQSS (102 aa)) form a DNA-binding region, TF-B3.

It localises to the nucleus. This is B3 domain-containing protein At5g24050 from Arabidopsis thaliana (Mouse-ear cress).